The following is a 48-amino-acid chain: uncharacterized protein (48 aa).

Residues Ile-20–His-37 form a helical membrane-spanning segment.

The protein resides in the membrane. This is an uncharacterized protein from Saccharomyces cerevisiae (strain ATCC 204508 / S288c) (Baker's yeast).